We begin with the raw amino-acid sequence, 463 residues long: Mitochondrial distribution and morphology protein 10 (463 aa).

It belongs to the MDM10 family. In terms of assembly, component of the ER-mitochondria encounter structure (ERMES) or MDM complex, composed of MMM1, MDM10, MDM12 and MDM34. Associates with the mitochondrial outer membrane sorting assembly machinery SAM(core) complex.

It is found in the mitochondrion outer membrane. Its function is as follows. Component of the ERMES/MDM complex, which serves as a molecular tether to connect the endoplasmic reticulum and mitochondria. Components of this complex are involved in the control of mitochondrial shape and protein biogenesis and may function in phospholipid exchange. MDM10 is involved in the late assembly steps of the general translocase of the mitochondrial outer membrane (TOM complex). Functions in the TOM40-specific route of the assembly of outer membrane beta-barrel proteins, including the association of TOM40 with the receptor TOM22 and small TOM proteins. Can associate with the SAM(core) complex as well as the MDM12-MMM1 complex, both involved in late steps of the major beta-barrel assembly pathway, that is responsible for biogenesis of all outer membrane beta-barrel proteins. May act as a switch that shuttles between both complexes and channels precursor proteins into the TOM40-specific pathway. Plays a role in mitochondrial morphology and in the inheritance of mitochondria. The chain is Mitochondrial distribution and morphology protein 10 from Candida dubliniensis (strain CD36 / ATCC MYA-646 / CBS 7987 / NCPF 3949 / NRRL Y-17841) (Yeast).